A 228-amino-acid polypeptide reads, in one-letter code: MTHLLIVDDEQDIVDICQTYFEYEGYKVTTTTSGKEAISLLSNDIDIMVLDIMMPEVNGYDIVKEMKRQKLDIPFIYLTAKTQEHDTIYALTLGADDYVKKPFSPRELVLRINNLLTRMKKYHHQPVEQLSFDELTLINLSKVVTVNGHEVPMRIKEFELLWYLASRENEVISKSELLEKVWGYDYYEDANTVNVHIHRIREKLEKESFTTYTITTVWGLGYKFERSR.

The region spanning 3–116 is the Response regulatory domain; the sequence is HLLIVDDEQD…ELVLRINNLL (114 aa). Asp51 carries the post-translational modification 4-aspartylphosphate. The ompR/PhoB-type DNA-binding region spans 127 to 226; it reads VEQLSFDELT…VWGLGYKFER (100 aa).

In terms of processing, phosphorylated by SaeS.

The protein resides in the cytoplasm. In terms of biological role, member of the two-component regulatory system SaeR/SaeS involved in the regulation of staphylococcal virulence factors in a strain-dependent fashion. Probably functions as a transcriptional regulator via a specific DNA-binding domain, recognizing motifs near the promoter sequences of target genes. The chain is Response regulator SaeR (saeR) from Staphylococcus aureus (strain USA300).